A 178-amino-acid polypeptide reads, in one-letter code: Large ribosomal subunit protein uL6 (178 aa).

The protein belongs to the universal ribosomal protein uL6 family. As to quaternary structure, part of the 50S ribosomal subunit.

Its function is as follows. This protein binds to the 23S rRNA, and is important in its secondary structure. It is located near the subunit interface in the base of the L7/L12 stalk, and near the tRNA binding site of the peptidyltransferase center. The protein is Large ribosomal subunit protein uL6 of Campylobacter jejuni subsp. doylei (strain ATCC BAA-1458 / RM4099 / 269.97).